Here is a 277-residue protein sequence, read N- to C-terminus: Probable endonuclease LCL3 (277 aa).

The helical transmembrane segment at 39–56 (WIAPIIAAGATMGFWSFY) threads the bilayer. Residues 77-239 (RSLFGKVTSV…RQKGKGMWSL (163 aa)) enclose the TNase-like domain. Residue arginine 126 is part of the active site. Aspartate 131 serves as a coordination point for Ca(2+). Catalysis depends on residues glutamate 134 and arginine 174.

This sequence belongs to the LCL3 family.

The protein localises to the mitochondrion. The protein resides in the membrane. The sequence is that of Probable endonuclease LCL3 (LCL3) from Podospora anserina (strain S / ATCC MYA-4624 / DSM 980 / FGSC 10383) (Pleurage anserina).